A 596-amino-acid chain; its full sequence is Ulvan-active sulfatase (596 aa).

Positions 1 to 27 (MLFLRFKFFNNRLLFVSVLCFVICVSC) are cleaved as a signal peptide. The Ca(2+) site is built by E58, D59, C97, D306, and H307. C97 functions as the Nucleophile in the catalytic mechanism. C97 carries the post-translational modification 3-oxoalanine (Cys).

It belongs to the sulfatase family. Ca(2+) serves as cofactor. The conversion to 3-oxoalanine (also known as C-formylglycine, FGly), of a serine or cysteine residue in prokaryotes and of a cysteine residue in eukaryotes, is critical for catalytic activity.

The protein localises to the periplasm. Functionally, sulfatase involved in ulvan degradation. Ulvan is the main polysaccharide component of the Ulvales (green seaweed) cell wall. It is composed of disaccharide building blocks comprising 3-sulfated rhamnose (Rha3S) linked to D-glucuronic acid (GlcA), L-iduronic acid (IduA), or D-xylose (Xyl). The sulfatase desulfates Xyl2S-Rha3S, product of the degradation of ulvan by endo-acting alpha-1,4-L-rhamnosidase, to Xyl-Rha3S. The polypeptide is Ulvan-active sulfatase (Formosa agariphila (strain DSM 15362 / KCTC 12365 / LMG 23005 / KMM 3901 / M-2Alg 35-1)).